A 442-amino-acid chain; its full sequence is Small RNA 2'-O-methyltransferase (442 aa).

S-adenosyl-L-methionine-binding residues include Gly125 and Asp151. Mg(2+)-binding residues include Glu209, Glu212, His213, and His260.

It belongs to the methyltransferase superfamily. HEN1 family. It depends on Mg(2+) as a cofactor. As to expression, broadly expressed in the germline and somatic tissues in both hermaphrodites and males.

The protein localises to the cytoplasm. The protein resides in the nucleus. It is found in the nucleoplasm. It localises to the cytoplasmic granule. It carries out the reaction small RNA 3'-end nucleotide + S-adenosyl-L-methionine = small RNA 3'-end 2'-O-methylnucleotide + S-adenosyl-L-homocysteine + H(+). In terms of biological role, methyltransferase that adds a 2'-O-methyl group at the 3'-end of PIWI-interacting RNAs (piRNAs) and small interfering RNAs (siRNAs) which are classes of regulatory RNAs that are involved in gene silencing in endogenous RNA interference (RNAi) pathways. Methylation protects the 3'-end of small RNAs from tailing and trimming and could constitute a recognition signal for appropriate argonaute machineries. Methylates and stabilizes 26G-siRNAs (a class of 26 nucleotide siRNAs that possess a monophosphorylated guanine residue at the 5'-end) when they are bound by argonaute protein ergo-1. This occurs in the female germline and embryo, but not in the male germline. Does not methylate 26G-siRNAs bound by argonaute proteins alg-3 or alg-4. Methylates and stabilizes 21U-piRNAs, which are a class of 21 nucleotide piRNAs that possess a uracil residue at the 5'-end, in the male and female germline. In addition, may play a role in exogenous RNAi (exoRNAi) pathways in the germline. The polypeptide is Small RNA 2'-O-methyltransferase (Caenorhabditis elegans).